The chain runs to 146 residues: 3-hydroxyacyl-[acyl-carrier-protein] dehydratase FabZ (146 aa).

Histidine 47 is a catalytic residue.

It belongs to the thioester dehydratase family. FabZ subfamily.

It is found in the cytoplasm. It catalyses the reaction a (3R)-hydroxyacyl-[ACP] = a (2E)-enoyl-[ACP] + H2O. Functionally, involved in unsaturated fatty acids biosynthesis. Catalyzes the dehydration of short chain beta-hydroxyacyl-ACPs and long chain saturated and unsaturated beta-hydroxyacyl-ACPs. The sequence is that of 3-hydroxyacyl-[acyl-carrier-protein] dehydratase FabZ from Nitrosospira multiformis (strain ATCC 25196 / NCIMB 11849 / C 71).